The sequence spans 256 residues: Imidazole glycerol phosphate synthase subunit HisF (256 aa).

Catalysis depends on residues Asp11 and Asp130.

The protein belongs to the HisA/HisF family. As to quaternary structure, heterodimer of HisH and HisF.

It is found in the cytoplasm. The catalysed reaction is 5-[(5-phospho-1-deoxy-D-ribulos-1-ylimino)methylamino]-1-(5-phospho-beta-D-ribosyl)imidazole-4-carboxamide + L-glutamine = D-erythro-1-(imidazol-4-yl)glycerol 3-phosphate + 5-amino-1-(5-phospho-beta-D-ribosyl)imidazole-4-carboxamide + L-glutamate + H(+). Its pathway is amino-acid biosynthesis; L-histidine biosynthesis; L-histidine from 5-phospho-alpha-D-ribose 1-diphosphate: step 5/9. Its function is as follows. IGPS catalyzes the conversion of PRFAR and glutamine to IGP, AICAR and glutamate. The HisF subunit catalyzes the cyclization activity that produces IGP and AICAR from PRFAR using the ammonia provided by the HisH subunit. In Prochlorococcus marinus (strain MIT 9301), this protein is Imidazole glycerol phosphate synthase subunit HisF.